The chain runs to 341 residues: tRNA N6-adenosine threonylcarbamoyltransferase (341 aa).

Fe cation is bound by residues His-111 and His-115. Residues 134 to 138 (LVSGG), Asp-167, Gly-180, and Asn-272 contribute to the substrate site. Asp-300 contacts Fe cation.

This sequence belongs to the KAE1 / TsaD family. Fe(2+) serves as cofactor.

It is found in the cytoplasm. It carries out the reaction L-threonylcarbamoyladenylate + adenosine(37) in tRNA = N(6)-L-threonylcarbamoyladenosine(37) in tRNA + AMP + H(+). Functionally, required for the formation of a threonylcarbamoyl group on adenosine at position 37 (t(6)A37) in tRNAs that read codons beginning with adenine. Is involved in the transfer of the threonylcarbamoyl moiety of threonylcarbamoyl-AMP (TC-AMP) to the N6 group of A37, together with TsaE and TsaB. TsaD likely plays a direct catalytic role in this reaction. The sequence is that of tRNA N6-adenosine threonylcarbamoyltransferase from Psychromonas ingrahamii (strain DSM 17664 / CCUG 51855 / 37).